The sequence spans 556 residues: Cytochrome P450 monooxygenase polC (556 aa).

Residues 17-37 (LCFAISLLCAVAIATFLHKLY) form a helical membrane-spanning segment. Cys479 contacts heme.

Belongs to the cytochrome P450 family. It depends on heme as a cofactor.

It is found in the membrane. The enzyme catalyses motiol + 3 reduced [NADPH--hemoprotein reductase] + 3 O2 = 4beta-carboxyl motiol + 3 oxidized [NADPH--hemoprotein reductase] + 4 H2O + 4 H(+). It functions in the pathway secondary metabolite biosynthesis; terpenoid biosynthesis. Functionally, cytochrome P450 monooxygenase; part of the gene cluster that mediates the biosynthesis of antifungal fernane-type triterpenoid polytolypin. PolC uses motiol as a substrate and converts the methyl group at position C-4 to a carboxyl group. Within the pathway, the triterpene cyclase polA first catalyzes the cyclization of 2,3-oxidosqualene to motiol, polC converts the 4-alpha-methyl group of motiol to a carboxyl group, polB is responsible for appending a hydroxyl group at the 2-alpha position and polE is a dual functional P450, which can catalyze the formation of both the 1-beta-hydroxyl group and 10-beta-carboxyl group. In Polytolypa hystricis (strain UAMH7299), this protein is Cytochrome P450 monooxygenase polC.